The following is a 1007-amino-acid chain: Lysosomal alpha-mannosidase (1007 aa).

2 stretches are compositionally biased toward low complexity: residues 1 to 10 (MGADARPLGV) and 19 to 28 (AARPGTSSRA). The interval 1-30 (MGADARPLGVRAGGGGRGAARPGTSSRALP) is disordered. Residues 1 to 50 (MGADARPLGVRAGGGGRGAARPGTSSRALPPPLPPLSFLLLLLAAPGARA) form the signal peptide. 2 disulfides stabilise this stretch: C56–C360 and C269–C274. 2 residues coordinate Zn(2+): H73 and D75. N134 carries N-linked (GlcNAc...) asparagine glycosylation. Zn(2+) is bound at residue D197. Catalysis depends on D197, which acts as the Nucleophile. N-linked (GlcNAc...) asparagine glycosylation is found at N311, N347, and N369. Disulfide bonds link C414/C474 and C495/C503. H448 lines the Zn(2+) pocket. 7 N-linked (GlcNAc...) asparagine glycosylation sites follow: N499, N543, N643, N649, N690, N764, and N927.

This sequence belongs to the glycosyl hydrolase 38 family. Zn(2+) is required as a cofactor. In terms of processing, processed into 3 peptides of 72 kDa, 41 kDa and 12 kDa.

The protein resides in the lysosome. The enzyme catalyses Hydrolysis of terminal, non-reducing alpha-D-mannose residues in alpha-D-mannosides.. In terms of biological role, necessary for the catabolism of N-linked carbohydrates released during glycoprotein turnover. The chain is Lysosomal alpha-mannosidase (MAN2B1) from Felis catus (Cat).